A 2034-amino-acid polypeptide reads, in one-letter code: Host cell factor 1 (2034 aa).

The residue at position 2 (Ala2) is an N-acetylalanine. A Phosphoserine modification is found at Ser6. Kelch repeat units lie at residues 44–89, 93–140, 148–194, 217–265, and 266–313; these read LIVV…GFVC, RLLV…RLGH, KCYL…ITYG, KLVI…TIGN, and KMYV…LMDT. Glycyl lysine isopeptide (Lys-Gly) (interchain with G-Cter in ubiquitin) cross-links involve residues Lys105, Lys163, and Lys244. Lys282 is covalently cross-linked (Glycyl lysine isopeptide (Lys-Gly) (interchain with G-Cter in SUMO2)). N6-acetyllysine is present on Lys288. A Glycyl lysine isopeptide (Lys-Gly) (interchain with G-Cter in ubiquitin) cross-link involves residue Lys363. The Fibronectin type-III 1 domain occupies 366–469; that stretch reads PPARVQLVRA…TIQVLPTVPG (104 aa). Positions 407-434 are disordered; it reads ATATSPTPNPVPSVPANPPKSPAPAAAA. A Phosphoserine modification is found at Ser411. Over residues 413–428 the composition is skewed to pro residues; the sequence is TPNPVPSVPANPPKSP. Residues 500 to 550 are required for interaction with OGT; the sequence is LVTMRPASQAGKAPVTVTSLPASVRMVVPTQSAQGTVIGSNPQMSGMAALA. Omega-N-methylarginine is present on residues Arg504 and Arg524. 3 positions are modified to phosphoserine: Ser598, Ser666, and Ser669. Residues 610–722 form an interaction with SIN3A region; sequence LKTAAAQVGT…KGPLPAGTIL (113 aa). Residues 750-902 form an interaction with ZBTB17 region; it reads ILGISSVSPS…SLAGAGAHST (153 aa). Residue Lys813 is modified to N6-acetyllysine. The interaction with GABP2 stretch occupies residues 813-912; it reads KIITAVPKIA…SASLATPITT (100 aa). HCF repeat repeat units lie at residues 1010–1035, 1072–1097, and 1101–1126; these read TLVC…TVVA, VRVC…ATSN, and QHGC…AMSS. One copy of the HCF repeat 4; degenerate repeat lies at 1156 to 1182; it reads RAQGTVKPPCQTQQTNMTSTTMTVQAT. Ser1204 and Ser1223 each carry phosphoserine. Disordered regions lie at residues 1221 to 1241, 1302 to 1374, 1444 to 1477, and 1491 to 1525; these read GPSS…TYTT, PCET…TTST, TVTS…NITS, and RAVT…QLPP. HCF repeat repeat units lie at residues 1295-1320 and 1323-1348; these read TQVC…SNAG and QRVC…ATSN. The span at 1308–1321 shows a compositional bias: low complexity; sequence TGTTNTATTSNAGS. An HCF repeat 7; degenerate repeat occupies 1358-1383; that stretch reads QQPASGHPCETHQTTSTGTTMSVSVG. The stretch at 1423-1448 is one HCF repeat 8 repeat; that stretch reads QRVCSNPPCETHETGTTHTATTVTSN. The span at 1491-1501 shows a compositional bias: low complexity; that stretch reads RAVTTVTQSTP. Thr1500 bears the Phosphothreonine mark. A compositionally biased stretch (pro residues) spans 1502 to 1511; that stretch reads VPGPSVPPPE. Phosphoserine is present on residues Ser1506 and Ser1516. A coiled-coil region spans residues 1693-1723; that stretch reads IVLTQQELAALVQQQQQLQEAQAQAQQQHHL. Ser1782 is subject to Phosphoserine. Fibronectin type-III domains lie at 1808–1899 and 1901–2017; these read LPPP…TCLP and FPGA…TSKD. Glycyl lysine isopeptide (Lys-Gly) (interchain with G-Cter in ubiquitin) cross-links involve residues Lys1818 and Lys1819. Phosphoserine is present on Ser1849. The interval 2005–2034 is disordered; that stretch reads ATQVRWLQETSKDSSGTKPASKRPMSSPEM. The residue at position 2016 (Lys2016) is an N6-acetyllysine.

Composed predominantly of six polypeptides ranging from 110 to 150 kDa and a minor 300 kDa polypeptide. The majority of N- and C-terminal cleavage products remain tightly, albeit non-covalently, associated. Interacts with POU2F1, CREB3, ZBTB17, EGR2, E2F4, CREBZF, SP1, GABP2, Sin3 HDAC complex (SIN3A, HDAC1, HDAC2, SUDS3), SAP30, SIN3B and FHL2. Component of a MLL1 complex, composed of at least the core components KMT2A/MLL1, ASH2L, HCFC1, WDR5 and RBBP5, as well as the facultative components BACC1, CHD8, DPY30, E2F6, HCFC2, HSP70, INO80C, KANSL1, LAS1L, MAX, MCRS1, MEN1, MGA, KAT8, PELP1, PHF20, PRP31, RING2, RUVBL1, RUVBL2, SENP3, TAF1, TAF4, TAF6, TAF7, TAF9 and TEX10. Component of a THAP1/THAP3-HCFC1-OGT complex that is required for the regulation of the transcriptional activity of RRM1. Interacts directly with THAP3 (via its HBM). Interacts (via the Kelch-repeat domain) with THAP1 (via the HBM); the interaction recruits HCHC1 to the RRM1. Interacts with THAP7 and THAP11 (via the HMB). Interacts directly with OGT; the interaction, which requires the HCFC1 cleavage site domain, glycosylates and promotes the proteolytic processing of HCFC1, retains OGT in the nucleus and impacts the expression of herpes simplex virus immediate early viral genes. Component of the SET1 complex, at least composed of the catalytic subunit (SETD1A or SETD1B), WDR5, WDR82, RBBP5, ASH2L, CXXC1, HCFC1 and DPY30. Component of the NSL complex at least composed of MOF/KAT8, KANSL1, KANSL2, KANSL3, MCRS1, PHF20, OGT1/OGT, WDR5 and HCFC1. Component of a complex at least composed of ZNF335, HCFC1, CCAR2, EMSY, MKI67, RBBP5, ASH2L and WDR5; the complex is formed as a result of interactions between components of a nuclear receptor-mediated transcription complex and a histone methylation complex. Within the complex interacts with ZNF335. Interacts with TET2 and TET3. Interacts with HCFC1R1. Interacts with THAP11. Interacts (via Kelch domain) with KMT2E/MLL5 isoform 3 (via HBM motif). Interacts with E2F1. Accessory scaffold component of the polycomb repressive deubiquitinase (PR-DUB) complex, at least composed of BAP1, one of ASXL1, ASXL2 or (probably) ASXL3 and one of MBD5 or MBD6; the PR-DUB core associates with a number of accessory proteins, including FOXK1, FOXK2, KDM1B, HCFC1, YY1 and OGT. Interacts with YY1 (via Gly-rich region); the interaction is direct. Interacts with BAP1 (via HBM-like motif). Proteolytically cleaved at one or several PPCE--THET sites within the HCF repeats. Further cleavage of the primary N- and C-terminal chains results in a 'trimming' and accumulation of the smaller chains. Cleavage is promoted by O-glycosylation. In terms of processing, O-glycosylated. GlcNAcylation by OGT promotes proteolytic processing. Post-translationally, ubiquitinated. Lys-1818 and Lys-1819 are ubiquitinated both via 'Lys-48'- and 'Lys-63'-linked polyubiquitin chains. BAP1 mediated deubiquitination of 'Lys-48'-linked polyubiquitin chains; deubiquitination by BAP1 does not seem to stabilize the protein.

Its subcellular location is the cytoplasm. The protein localises to the nucleus. Transcriptional coregulator. Serves as a scaffold protein, bridging interactions between transcription factors, including THAP11 and ZNF143, and transcriptional coregulators. Involved in control of the cell cycle. Also antagonizes transactivation by ZBTB17 and GABP2; represses ZBTB17 activation of the p15(INK4b) promoter and inhibits its ability to recruit p300. Coactivator for EGR2 and GABP2. Tethers the chromatin modifying Set1/Ash2 histone H3 'Lys-4' methyltransferase (H3K4me) and Sin3 histone deacetylase (HDAC) complexes (involved in the activation and repression of transcription, respectively) together. Component of a THAP1/THAP3-HCFC1-OGT complex that is required for the regulation of the transcriptional activity of RRM1. As part of the NSL complex it may be involved in acetylation of nucleosomal histone H4 on several lysine residues. Recruits KMT2E/MLL5 to E2F1 responsive promoters promoting transcriptional activation and thereby facilitates G1 to S phase transition. Modulates expression of homeobox protein PDX1, perhaps acting in concert with transcription factor E2F1, thereby regulating pancreatic beta-cell growth and glucose-stimulated insulin secretion. May negatively modulate transcriptional activity of FOXO3. In Rattus norvegicus (Rat), this protein is Host cell factor 1.